The primary structure comprises 364 residues: Probable dual-specificity RNA methyltransferase RlmN (364 aa).

Glutamate 106 acts as the Proton acceptor in catalysis. One can recognise a Radical SAM core domain in the interval tyrosine 112–arginine 350. Cysteine 119 and cysteine 356 are joined by a disulfide. Cysteine 126, cysteine 130, and cysteine 133 together coordinate [4Fe-4S] cluster. Residues glycine 177 to glutamate 178, serine 211, serine 234 to histidine 236, and asparagine 313 contribute to the S-adenosyl-L-methionine site. Cysteine 356 functions as the S-methylcysteine intermediate in the catalytic mechanism.

This sequence belongs to the radical SAM superfamily. RlmN family. It depends on [4Fe-4S] cluster as a cofactor.

It is found in the cytoplasm. It catalyses the reaction adenosine(2503) in 23S rRNA + 2 reduced [2Fe-2S]-[ferredoxin] + 2 S-adenosyl-L-methionine = 2-methyladenosine(2503) in 23S rRNA + 5'-deoxyadenosine + L-methionine + 2 oxidized [2Fe-2S]-[ferredoxin] + S-adenosyl-L-homocysteine. The enzyme catalyses adenosine(37) in tRNA + 2 reduced [2Fe-2S]-[ferredoxin] + 2 S-adenosyl-L-methionine = 2-methyladenosine(37) in tRNA + 5'-deoxyadenosine + L-methionine + 2 oxidized [2Fe-2S]-[ferredoxin] + S-adenosyl-L-homocysteine. In terms of biological role, specifically methylates position 2 of adenine 2503 in 23S rRNA and position 2 of adenine 37 in tRNAs. The chain is Probable dual-specificity RNA methyltransferase RlmN from Mycobacterium ulcerans (strain Agy99).